The primary structure comprises 390 residues: Chorismate synthase 1 (390 aa).

NADP(+) is bound by residues R39 and R45. Residues 95–117 are disordered; the sequence is EQEEKEMKRKVTKPRPGHADLNG. Residues 132–134, 253–254, G298, 313–317, and R339 contribute to the FMN site; these read RSS, NA, and KPIPT.

Belongs to the chorismate synthase family. Homotetramer. Requires FMNH2 as cofactor.

The catalysed reaction is 5-O-(1-carboxyvinyl)-3-phosphoshikimate = chorismate + phosphate. It participates in metabolic intermediate biosynthesis; chorismate biosynthesis; chorismate from D-erythrose 4-phosphate and phosphoenolpyruvate: step 7/7. Functionally, catalyzes the anti-1,4-elimination of the C-3 phosphate and the C-6 proR hydrogen from 5-enolpyruvylshikimate-3-phosphate (EPSP) to yield chorismate, which is the branch point compound that serves as the starting substrate for the three terminal pathways of aromatic amino acid biosynthesis. This reaction introduces a second double bond into the aromatic ring system. The chain is Chorismate synthase 1 from Bacillus cereus (strain ZK / E33L).